A 340-amino-acid polypeptide reads, in one-letter code: Melanin-concentrating hormone receptor 2 (340 aa).

At 1-39 (MNPFHASCWNTSAELLNKSWNKEFAYQTASVVDTVILPS) the chain is on the extracellular side. N-linked (GlcNAc...) asparagine glycans are attached at residues N10 and N17. Residues 40-60 (MIGIICSTGLVGNILIVFTII) form a helical membrane-spanning segment. Residues 61–69 (RSRKKTVPD) lie on the Cytoplasmic side of the membrane. Residues 70-90 (IYICNLAVADLVHIVGMPFLI) form a helical membrane-spanning segment. Topologically, residues 91 to 104 (HQWARGGEWVFGGP) are extracellular. The chain crosses the membrane as a helical span at residues 105–129 (LCTIITSLDTCNQFACSAIMTVMSV). Residues 130 to 154 (DRYFALVQPFRLTRWRTRYKTIRIN) lie on the Cytoplasmic side of the membrane. A helical membrane pass occupies residues 155–175 (LGLWAASFILALPVWVYSKVI). Residues 176–200 (KFKDGVESCAFDLTSPDDVLWYTLY) lie on the Extracellular side of the membrane. Residues 201-221 (LTITTFFFPLPLILVCYILIL) form a helical membrane-spanning segment. At 222–252 (CYTWEMYQQNKDARCCNPSVPKQRVMKLTKM) the chain is on the cytoplasmic side. A helical transmembrane segment spans residues 253–273 (VLVLVVVFILSAAPYHVIQLV). Topologically, residues 274–288 (NLQMEQPTLAFYVGY) are extracellular. Residues 289-309 (YLSICLSYASSSINPFLYILL) form a helical membrane-spanning segment. Topologically, residues 310–340 (SGNFQKRLPQIQRRATEKEINNMGNTLKSHF) are cytoplasmic.

The protein belongs to the G-protein coupled receptor 1 family. Specifically expressed in the brain, with highest levels in cerebral cortex, hippocampus and amygdala. No expression detected in the cerebellum, thalamus or hypothalamus.

It is found in the cell membrane. Its function is as follows. Receptor for melanin-concentrating hormone, coupled to G proteins that activate phosphoinositide hydrolysis. This chain is Melanin-concentrating hormone receptor 2 (MCHR2), found in Homo sapiens (Human).